Consider the following 302-residue polypeptide: Nucleoside kinase (302 aa).

Substrate-binding residues include Asp-17, Gln-33, Gly-43, and Asn-47. An ATP-binding site is contributed by Gln-109. Residues 111-113 (TFF) and Gln-163 each bind substrate. ATP-binding positions include Asn-186 and 214-219 (TKGSKG). Residue Asp-247 coordinates substrate. Asp-247 acts as the Proton acceptor in catalysis.

Homodimer. Mg(2+) serves as cofactor. Mn(2+) is required as a cofactor.

The catalysed reaction is cytidine + ATP = CMP + ADP + H(+). The enzyme catalyses guanosine + ATP = GMP + ADP + H(+). It catalyses the reaction inosine + ATP = IMP + ADP + H(+). In terms of biological role, catalyzes the phosphorylation of a wide range of nucleosides to yield nucleoside monophosphates. Shows the highest activity for inosine, guanosine and cytidine, but very poor kinase activity with adenosine, thymidine, uridine and xanthosine. ATP is the best phosphate donor, but can also use ITP and GTP. Shows extremely low activity with fructose-6-phosphate. The chain is Nucleoside kinase from Methanocaldococcus jannaschii (strain ATCC 43067 / DSM 2661 / JAL-1 / JCM 10045 / NBRC 100440) (Methanococcus jannaschii).